Here is a 105-residue protein sequence, read N- to C-terminus: Thioredoxin (105 aa).

The region spanning 1 to 105 (ATMTLTDANF…LEAQLADVLQ (105 aa)) is the Thioredoxin domain. A disulfide bond links Cys29 and Cys32.

In terms of biological role, participates in various redox reactions through the reversible oxidation of its active center dithiol to a disulfide and catalyzes dithiol-disulfide exchange reactions. The sequence is that of Thioredoxin (trxA) from Alicyclobacillus acidocaldarius subsp. acidocaldarius (Bacillus acidocaldarius).